Here is a 191-residue protein sequence, read N- to C-terminus: dTTP/UTP pyrophosphatase (191 aa).

Residue aspartate 75 is the Proton acceptor of the active site.

It belongs to the Maf family. YhdE subfamily. A divalent metal cation serves as cofactor.

Its subcellular location is the cytoplasm. The enzyme catalyses dTTP + H2O = dTMP + diphosphate + H(+). The catalysed reaction is UTP + H2O = UMP + diphosphate + H(+). Its function is as follows. Nucleoside triphosphate pyrophosphatase that hydrolyzes dTTP and UTP. May have a dual role in cell division arrest and in preventing the incorporation of modified nucleotides into cellular nucleic acids. The polypeptide is dTTP/UTP pyrophosphatase (Aliivibrio fischeri (strain ATCC 700601 / ES114) (Vibrio fischeri)).